Here is a 276-residue protein sequence, read N- to C-terminus: Large ribosomal subunit protein uL2c (276 aa).

Disordered regions lie at residues 1–51 (MAIR…GIIT) and 224–276 (VVMN…RRRK). Composition is skewed to polar residues over residues 7–18 (RTYTPSTRNRPI) and 27–37 (SNPQKKLTSGQ).

This sequence belongs to the universal ribosomal protein uL2 family. In terms of assembly, part of the 50S ribosomal subunit.

Its subcellular location is the plastid. The protein resides in the chloroplast. This Cycas taitungensis (Prince sago) protein is Large ribosomal subunit protein uL2c (rpl2).